The sequence spans 332 residues: Ribosomal RNA small subunit methyltransferase C (332 aa).

Belongs to the methyltransferase superfamily. RsmC family. Monomer.

Its subcellular location is the cytoplasm. It carries out the reaction guanosine(1207) in 16S rRNA + S-adenosyl-L-methionine = N(2)-methylguanosine(1207) in 16S rRNA + S-adenosyl-L-homocysteine + H(+). In terms of biological role, specifically methylates the guanine in position 1207 of 16S rRNA in the 30S particle. The chain is Ribosomal RNA small subunit methyltransferase C from Pseudomonas aeruginosa (strain LESB58).